A 1066-amino-acid chain; its full sequence is Thyrotropin-releasing hormone-degrading ectoenzyme (1066 aa).

Residues 1 to 14 are compositionally biased toward basic and acidic residues; that stretch reads MALDGERGEQEEEK. Positions 1–43 are disordered; that stretch reads MALDGERGEQEEEKKKKKKKKKRKKKEEEGAEKSSSPFAATMG. The Cytoplasmic portion of the chain corresponds to 1 to 81; sequence MALDGERGEQ…ERHIAVHKRL (81 aa). A compositionally biased stretch (basic residues) spans 15–25; sequence KKKKKKKKRKK. Position 71 is a phosphothreonine; by PKC (T71). The chain crosses the membrane as a helical; Signal-anchor for type II membrane protein span at residues 82–102; the sequence is VLAFAVSIVALLAVTMLAVLL. Over 103 to 1066 the chain is Extracellular; that stretch reads SLRFDECGAS…FQWLGKAMRH (964 aa). The disordered stretch occupies residues 117–177; it reads GTDGGLGGFP…SEEEQEQWQP (61 aa). The span at 118 to 127 shows a compositional bias: gly residues; sequence TDGGLGGFPE. The N-linked (GlcNAc...) asparagine glycan is linked to N131. A compositionally biased stretch (basic and acidic residues) spans 143–154; the sequence is HAGEESSQREIG. N-linked (GlcNAc...) asparagine glycans are attached at residues N202, N217, N264, and N380. Residue 446 to 450 participates in substrate binding; the sequence is AAMEN. H482 is a Zn(2+) binding site. E483 (proton acceptor) is an active-site residue. H486 and E505 together coordinate Zn(2+). N-linked (GlcNAc...) asparagine glycosylation is found at N647, N676, N691, N705, N726, N842, and N948.

Belongs to the peptidase M1 family. In terms of assembly, homodimer; disulfide-linked. The cofactor is Zn(2+). As to expression, predominantly expressed in brain and pituitary. Lower levels in lung and liver.

It localises to the membrane. The catalysed reaction is Release of the N-terminal pyroglutamyl group from pGlu-|-His-Xaa tripeptides and pGlu-|-His-Xaa-Gly tetrapeptides.. In terms of biological role, specific inactivation of TRH after its release. This is Thyrotropin-releasing hormone-degrading ectoenzyme (Trhde) from Rattus norvegicus (Rat).